A 572-amino-acid chain; its full sequence is Mitochondrial distribution and morphology protein 34 (572 aa).

In terms of domain architecture, SMP-LTD spans 1–195 (MAFNFNWSPL…LPAIIHRLSL (195 aa)). 4 disordered regions span residues 212-236 (TASA…VDAL), 321-426 (VGSM…PDND), 477-522 (SATP…DNPT), and 553-572 (CGPF…AYGH). A compositionally biased stretch (low complexity) spans 330–348 (SASMVSSQSRSSTPSHTFS). Basic residues predominate over residues 358 to 370 (RHSKAHARKRKKR). Positions 371-381 (VVDLRRPKTTD) are enriched in basic and acidic residues. Polar residues-rich tracts occupy residues 387-400 (SDES…SAPS) and 500-511 (DSSAGSSRQLPS).

This sequence belongs to the MDM34 family. As to quaternary structure, component of the ER-mitochondria encounter structure (ERMES) or MDM complex, composed of mmm1, mdm10, mdm12 and mdm34.

It is found in the mitochondrion outer membrane. In terms of biological role, component of the ERMES/MDM complex, which serves as a molecular tether to connect the endoplasmic reticulum (ER) and mitochondria. Components of this complex are involved in the control of mitochondrial shape and protein biogenesis, and function in nonvesicular lipid trafficking between the ER and mitochondria. Mdm34 is required for the interaction of the ER-resident membrane protein mmm1 and the outer mitochondrial membrane-resident beta-barrel protein mdm10. The chain is Mitochondrial distribution and morphology protein 34 from Aspergillus fumigatus (strain CBS 144.89 / FGSC A1163 / CEA10) (Neosartorya fumigata).